A 212-amino-acid chain; its full sequence is Phosphatidylserine decarboxylase proenzyme (212 aa).

The active-site Schiff-base intermediate with substrate; via pyruvic acid is serine 182. A Pyruvic acid (Ser); by autocatalysis modification is found at serine 182.

The protein belongs to the phosphatidylserine decarboxylase family. PSD-A subfamily. As to quaternary structure, heterodimer of a large membrane-associated beta subunit and a small pyruvoyl-containing alpha subunit. Pyruvate serves as cofactor. Post-translationally, is synthesized initially as an inactive proenzyme. Formation of the active enzyme involves a self-maturation process in which the active site pyruvoyl group is generated from an internal serine residue via an autocatalytic post-translational modification. Two non-identical subunits are generated from the proenzyme in this reaction, and the pyruvate is formed at the N-terminus of the alpha chain, which is derived from the carboxyl end of the proenzyme. The post-translation cleavage follows an unusual pathway, termed non-hydrolytic serinolysis, in which the side chain hydroxyl group of the serine supplies its oxygen atom to form the C-terminus of the beta chain, while the remainder of the serine residue undergoes an oxidative deamination to produce ammonia and the pyruvoyl prosthetic group on the alpha chain.

Its subcellular location is the cell membrane. The enzyme catalyses a 1,2-diacyl-sn-glycero-3-phospho-L-serine + H(+) = a 1,2-diacyl-sn-glycero-3-phosphoethanolamine + CO2. The protein operates within phospholipid metabolism; phosphatidylethanolamine biosynthesis; phosphatidylethanolamine from CDP-diacylglycerol: step 2/2. Functionally, catalyzes the formation of phosphatidylethanolamine (PtdEtn) from phosphatidylserine (PtdSer). The chain is Phosphatidylserine decarboxylase proenzyme from Chlorobium phaeobacteroides (strain DSM 266 / SMG 266 / 2430).